Here is a 64-residue protein sequence, read N- to C-terminus: Toxin BmKIT3 (64 aa).

The LCN-type CS-alpha/beta domain maps to 1–61; it reads DGYIRGSNGC…TWKSESNTCG (61 aa). Cystine bridges form between C10–C60, C14–C35, C21–C42, and C25–C44. A Cysteine amide modification is found at C60.

This sequence belongs to the long (4 C-C) scorpion toxin superfamily. Sodium channel inhibitor family. Beta subfamily. Expressed by the venom gland.

Its subcellular location is the secreted. Its function is as follows. Depressant insect beta-toxins cause a transient contraction paralysis followed by a slow flaccid paralysis. They bind voltage-independently at site-4 of sodium channels (Nav) and shift the voltage of activation toward more negative potentials thereby affecting sodium channel activation and promoting spontaneous and repetitive firing. The polypeptide is Toxin BmKIT3 (Olivierus martensii (Manchurian scorpion)).